The following is a 421-amino-acid chain: 4-hydroxy-3-methylbut-2-en-1-yl diphosphate synthase (flavodoxin) (421 aa).

[4Fe-4S] cluster is bound by residues Cys-300, Cys-303, Cys-346, and Glu-353.

Belongs to the IspG family. [4Fe-4S] cluster serves as cofactor.

It catalyses the reaction (2E)-4-hydroxy-3-methylbut-2-enyl diphosphate + oxidized [flavodoxin] + H2O + 2 H(+) = 2-C-methyl-D-erythritol 2,4-cyclic diphosphate + reduced [flavodoxin]. Its pathway is isoprenoid biosynthesis; isopentenyl diphosphate biosynthesis via DXP pathway; isopentenyl diphosphate from 1-deoxy-D-xylulose 5-phosphate: step 5/6. Functionally, converts 2C-methyl-D-erythritol 2,4-cyclodiphosphate (ME-2,4cPP) into 1-hydroxy-2-methyl-2-(E)-butenyl 4-diphosphate. The chain is 4-hydroxy-3-methylbut-2-en-1-yl diphosphate synthase (flavodoxin) from Laribacter hongkongensis (strain HLHK9).